We begin with the raw amino-acid sequence, 7481 residues long: Polyketide synthase GfsA (7481 aa).

A loading module (LM) region spans residues 24–1020 (ASDEPIAVIG…ETAEFVRARL (997 aa)). A Ketosynthase family 3 (KS3) 1 domain is found at 26–451 (DEPIAVIGLS…GTNCHVVVSA (426 aa)). The disordered stretch occupies residues 60 to 80 (RVPADRETPPSTEEESADGEA). Residue Gln-197 is the For decarboxylation activity of LM of the active site. Ser-662 acts as the For acyltransferase activity of LM in catalysis. Positions 945–1020 (PDPVETVRQL…ETAEFVRARL (76 aa)) constitute a Carrier 1 domain. An O-(pantetheine 4'-phosphoryl)serine modification is found at Ser-980. Residues 1038–1454 (DEPIAVVAMS…GTNAHVILEQ (417 aa)) enclose the Ketosynthase family 3 (KS3) 2 domain. Module stretches follow at residues 1038–2517 (DEPI…AGEL), 2538–4063 (EDPI…LQRI), 4084–5636 (DDPI…GSEV), and 5655–7400 (DEPV…GEQL). Active-site for beta-ketoacyl synthase 1 activity residues include Cys-1201, His-1336, and His-1376. The Carrier 2 domain maps to 2442 to 2517 (RVLLDLVRGR…ALAEHLAGEL (76 aa)). Residue Ser-2477 is modified to O-(pantetheine 4'-phosphoryl)serine. The Ketosynthase family 3 (KS3) 3 domain occupies 2538–2964 (EDPIAIVAMS…GTNAHVIIEE (427 aa)). Catalysis depends on for beta-ketoacyl synthase 2 activity residues Cys-2711, His-2846, and His-2886. The Carrier 3 domain occupies 3988 to 4063 (QALQDLVLTE…ATTEYLLQRI (76 aa)). At Ser-4023 the chain carries O-(pantetheine 4'-phosphoryl)serine. The Ketosynthase family 3 (KS3) 4 domain occupies 4084-4514 (DDPIAIVAMG…GTNAHVILEQ (431 aa)). Active-site for beta-ketoacyl synthase 3 activity residues include Cys-4261, His-4396, and His-4436. Residues 5561-5636 (TALLDLIRGQ…ALAEYVGSEV (76 aa)) form the Carrier 4 domain. An O-(pantetheine 4'-phosphoryl)serine modification is found at Ser-5596. In terms of domain architecture, Ketosynthase family 3 (KS3) 5 spans 5655–6081 (DEPVAIIGMS…GTNAHVILEQ (427 aa)). Catalysis depends on for beta-ketoacyl synthase 4 activity residues Cys-5828, His-5963, and His-6003. The N-terminal hotdog fold stretch occupies residues 6561 to 6685 (HPLLGAAVAL…GVLASGAATV (125 aa)). Positions 6561–6841 (HPLLGAAVAL…LRPVSADTIA (281 aa)) constitute a PKS/mFAS DH domain. Catalysis depends on His-6593, which acts as the Proton acceptor; for dehydratase activity. Residues 6700 to 6841 (ATAVDIDGLY…LRPVSADTIA (142 aa)) are C-terminal hotdog fold. Asp-6761 serves as the catalytic Proton donor; for dehydratase activity. One can recognise a Carrier 5 domain in the interval 7325–7400 (QELLDFVCEH…LLAGHIGEQL (76 aa)). O-(pantetheine 4'-phosphoryl)serine is present on Ser-7360.

In terms of assembly, homodimer. The loading module (LM, residues 13-926) dimerizes. LM cross-links to its cognate acyl-carrier domain in a manner that seems physiological; mutation of residues in the 2 domains alters reactions efficiency in a manner predicted by the cross-linked crystal. Requires pantetheine 4'-phosphate as cofactor.

Its pathway is antibiotic biosynthesis. In terms of biological role, first protein in the synthesis of the 16-membered macrolide antibiotics FD-891 and FD-892. Composed of 5 modules; the first is a loading module (LM) that synthesizes a starter unit used by the first elongation module for polyketide chain elongation. The starter unit is extended by multiple rounds of addition of malonyl-CoA or methylmalonyl-CoA, and other modifications to help generate the final products. The loading module (residues 1-927, LM with an inactive acyltransferase domain) preferentially decarboxylates malonyl-GfsA acyl carrier protein of the LM (ACP-LM) over methylmalonyl-GfsA ACP-LM and has no activity on malonyl-CoA or methymalonyl-CoA. LM decarboxylates malonyl-ACP-LM better than the malonyl-ACP-1 module of GfsA (i.e. the next module in the same protein) and has no activity on other malonyl-ACP modules. The sequence is that of Polyketide synthase GfsA from Streptomyces halstedii.